A 164-amino-acid chain; its full sequence is 3-isopropylmalate dehydratase small subunit (164 aa).

It belongs to the LeuD family. LeuD type 2 subfamily. As to quaternary structure, heterodimer of LeuC and LeuD.

It catalyses the reaction (2R,3S)-3-isopropylmalate = (2S)-2-isopropylmalate. Its pathway is amino-acid biosynthesis; L-leucine biosynthesis; L-leucine from 3-methyl-2-oxobutanoate: step 2/4. Its function is as follows. Catalyzes the isomerization between 2-isopropylmalate and 3-isopropylmalate, via the formation of 2-isopropylmaleate. The protein is 3-isopropylmalate dehydratase small subunit of Syntrophus aciditrophicus (strain SB).